Reading from the N-terminus, the 239-residue chain is Ribonuclease 3 (239 aa).

Residues 18-141 (YTTLEKALGY…LMAGVYLEAG (124 aa)) form the RNase III domain. E54 lines the Mg(2+) pocket. D58 is a catalytic residue. S127 and E130 together coordinate Mg(2+). Residue E130 is part of the active site. Positions 168 to 237 (DYKTALQELT…AYQALQKLKE (70 aa)) constitute a DRBM domain.

It belongs to the ribonuclease III family. In terms of assembly, homodimer. Mg(2+) serves as cofactor.

Its subcellular location is the cytoplasm. It carries out the reaction Endonucleolytic cleavage to 5'-phosphomonoester.. Functionally, digests double-stranded RNA. Involved in the processing of primary rRNA transcript to yield the immediate precursors to the large and small rRNAs (23S and 16S). Processes some mRNAs, and tRNAs when they are encoded in the rRNA operon. Processes pre-crRNA and tracrRNA of type II CRISPR loci if present in the organism. In Helicobacter pylori (strain ATCC 700392 / 26695) (Campylobacter pylori), this protein is Ribonuclease 3.